The sequence spans 101 residues: Anti-sigma factor RshA (101 aa).

The interval 1-20 is disordered; that stretch reads MSETEREDERWTPPIGPIDP. Iron-sulfur cluster is bound by residues Cys25, His51, Cys55, and Cys58. Residue Thr96 is modified to Phosphothreonine.

The protein belongs to the zinc-associated anti-sigma factor (ZAS) superfamily. In terms of assembly, interacts with cognate ECF RNA polymerase sigma factor SigH under reducing conditions; the complex is disrupted under oxiding conditions or as temperatures rise. Binding inhibits the interaction of SigH with the RNA polymerase catalytic core. Iron-sulfur cluster serves as cofactor. Post-translationally, phosphorylated, probably by PknB. Phosphorylation decreases interaction with SigH, probably leading to increased SigH-mediated transcription.

In terms of biological role, a redox-regulated anti-sigma factor for cognate extracytoplasmic function (ECF) sigma factor SigH. ECF sigma factors are held in an inactive form by an anti-sigma factor. Overexpression leads to increased susceptibility to diamide. In Mycolicibacterium smegmatis (strain ATCC 700084 / mc(2)155) (Mycobacterium smegmatis), this protein is Anti-sigma factor RshA (rshA).